Consider the following 99-residue polypeptide: Bacterial microcompartment protein homohexamer (99 aa).

Positions 4–88 constitute a BMC domain; the sequence is ALGMIEVRGF…PHVNVDAALP (85 aa).

This sequence belongs to the bacterial microcompartments protein family. In terms of assembly, homohexamer with a small central pore. When purified protein is examined by atomic force microscopy it dynamically makes uniform patches about 35 Angstroms thick with hexamers in the same orientation. In the BMC the concave side faces outward, with the N- and C-terminii exposed to the cytoplasm.

It localises to the bacterial microcompartment. Its function is as follows. The only hexameric shell protein in this bacterium, it forms the majority of the bacterial microcompartment (BMC) shell. Expression of 5 proteins in E.coli (BMC-H (Hoch_5815), BMC-P (Hoch_5814), and 3 BMC-T (Hoch_5812, Hoch_5816, Hoch_3341)) forms a 40 nm artificial BMC with a molecular mass of 6.5 MDa. There are 60 BMC-H hexamers per BMC. The shell facets are 20-30 Angstroms thick (a single hexamer layer), with 1 of BMC-T trimers protruding to the exterior. In Haliangium ochraceum (strain DSM 14365 / JCM 11303 / SMP-2), this protein is Bacterial microcompartment protein homohexamer.